The following is a 311-amino-acid chain: Protoheme IX farnesyltransferase (311 aa).

The next 9 membrane-spanning stretches (helical) occupy residues 32–52 (VMSL…VPIN), 53–73 (PWYG…AGAL), 104–124 (FIFG…FINW), 125–145 (FAAF…TIWL), 153–173 (IVIG…VTTG), 180–200 (FLLF…LSLF), 224–244 (KQIL…CFTG), 245–265 (LGGV…IYFA), and 285–305 (FFFS…ESLV).

Belongs to the UbiA prenyltransferase family. Protoheme IX farnesyltransferase subfamily.

It localises to the cell inner membrane. It carries out the reaction heme b + (2E,6E)-farnesyl diphosphate + H2O = Fe(II)-heme o + diphosphate. Its pathway is porphyrin-containing compound metabolism; heme O biosynthesis; heme O from protoheme: step 1/1. In terms of biological role, converts heme B (protoheme IX) to heme O by substitution of the vinyl group on carbon 2 of heme B porphyrin ring with a hydroxyethyl farnesyl side group. This Bartonella tribocorum (strain CIP 105476 / IBS 506) protein is Protoheme IX farnesyltransferase.